The following is a 168-amino-acid chain: 6-pyruvoyl tetrahydrobiopterin synthase (168 aa).

H19 contributes to the Zn(2+) binding site. C38 acts as the Proton acceptor in catalysis. Zn(2+) contacts are provided by H44 and H46. Residues H85 and E130 each act as charge relay system in the active site. At S159 the chain carries Phosphoserine. A Phosphothreonine modification is found at T161. Residues S164, S165, and S167 each carry the phosphoserine modification.

The protein belongs to the PTPS family. In terms of assembly, homohexamer formed of two homotrimers in a head to head fashion. Requires Zn(2+) as cofactor.

The enzyme catalyses 7,8-dihydroneopterin 3'-triphosphate = 6-pyruvoyl-5,6,7,8-tetrahydropterin + triphosphate + H(+). It functions in the pathway cofactor biosynthesis; tetrahydrobiopterin biosynthesis; tetrahydrobiopterin from 7,8-dihydroneopterin triphosphate: step 1/3. Its function is as follows. Required for pigment and biopterin synthesis. This Drosophila melanogaster (Fruit fly) protein is 6-pyruvoyl tetrahydrobiopterin synthase (pr).